Consider the following 456-residue polypeptide: General transcription factor IIE subunit 1 (456 aa).

Residues 11–100 (LDDLVKMVIR…LWYIDYKHII (90 aa)) form the HTH TFE/IIEalpha-type domain. The segment at 129–157 (CQTCHKVYTALDIPKLLNMDTGALACEIC) adopts a C4-type zinc-finger fold. The segment at 345–402 (ESAPDSGDADGNGSNSGSGGSTIEGNDGGNGEHQNKKMKLDDSQTVSSMSQSDDDGKD) is disordered. The segment covering 347 to 357 (APDSGDADGNG) has biased composition (low complexity). Positions 358–375 (SNSGSGGSTIEGNDGGNG) are enriched in gly residues. The segment covering 377-386 (HQNKKMKLDD) has biased composition (basic and acidic residues).

The protein belongs to the TFIIE alpha subunit family. TFIIE is a tetramer of two alpha and two beta subunits.

The protein localises to the nucleus. In terms of biological role, recruits TFIIH to the initiation complex and stimulates the RNA polymerase II C-terminal domain kinase and DNA-dependent ATPase activities of TFIIH. Both TFIIH and TFIIE are required for promoter clearance by RNA polymerase. This chain is General transcription factor IIE subunit 1 (gtf2e1-1), found in Dictyostelium discoideum (Social amoeba).